Reading from the N-terminus, the 232-residue chain is DNA repair protein RecO (232 aa).

It belongs to the RecO family.

In terms of biological role, involved in DNA repair and RecF pathway recombination. The chain is DNA repair protein RecO from Francisella tularensis subsp. novicida (strain U112).